A 1587-amino-acid chain; its full sequence is Mediator of RNA polymerase II transcription subunit 23 (1587 aa).

2 disordered regions span residues 1374–1484 (SQSE…QLQH) and 1567–1587 (QHQQ…QQPH). Residues 1385–1404 (PPEKEKSPEKEKEQEQEQHV) show a composition bias toward basic and acidic residues. The interval 1387–1404 (EKEKSPEKEKEQEQEQHV) is acidic. A compositionally biased stretch (polar residues) spans 1410-1426 (LESTPSVSSLPQMQHHL). Residues 1430-1450 (PLLPSHQMMPPPQQHSSSLQH) are compositionally biased toward low complexity. Positions 1463–1484 (DTSQHQTIQQQSNHPTQQQLQH) are enriched in polar residues. Low complexity predominate over residues 1567–1576 (QHQQYMQQQQ). Residues 1577–1587 (QHHHQHQQQPH) are compositionally biased toward basic residues.

This sequence belongs to the Mediator complex subunit 23 family. In terms of assembly, component of the Mediator complex. Interacts with let-19/mdt-13.

It is found in the nucleus. Component of the Mediator complex, a coactivator involved in regulated gene transcription of nearly all RNA polymerase II-dependent genes. Mediator functions as a bridge to convey information from gene-specific regulatory proteins to the basal RNA polymerase II transcription machinery. Mediator is recruited to promoters by direct interactions with regulatory proteins and serves as a scaffold for the assembly of a functional pre-initiation complex with RNA polymerase II and the general transcription factors. Functions downstream of receptor let-23 and let-60/Ras during vulval induction likely by down-regulating the expression of phosphatase dep-1 and lin-12/Notch in vulva precursor cell descendants with a primary cell fate. Acts to repress beta-catenin target genes. Required for asymmetric division of T-cells. Plays a role in responses to M.nematophilum-mediated bacterial infection by promoting tail swelling and preventing constipation. The polypeptide is Mediator of RNA polymerase II transcription subunit 23 (sur-2) (Caenorhabditis elegans).